The following is a 540-amino-acid chain: MYGGEDFNNTQQDFYDDYAHTGDPALDLEYERNYYANRMPENVKYFLINFCQAIKEGNLYDIQNMYENTFPQISDHHFDKSAWPEEQEVGAIVDNDKVFLILYKELYYRHIHARIPGGPKLDQRINSFFNYCDFFNLIISAQNPVLLELPDIWLWELVDEFVYQFQNFAQYRARLTDKSQDEIQQLCVNHSNVWSILCILNVLHSLVDISNIKKQLEAISQGIDPQTVAGDFGKLAFYKMLGYFSLVGLLRVHSLLGDYYQAIKVLEPIEIHKKSAYSHIPACQISTSYYVGFAYMMMRRYADAIRTFSDILLYIQRTKQLYSTRSYQNDQINKQAEQMYHLLAICLVLHPQCIDESIQQVLREKNYHDAMFKMQCGDLEVFKSFFVFACPRFVSPCPPVADAPLEDYVKDPMEHQLLVFMDEVRQQKDLPTTRSYLKLYTTLPLTKLASFIDPNANEDDVSKLLIRLLCFKHKMRNLVWSKGPSGLEGTFKSGSELDFYIDDDMIHIADTKVSHRYGDFFVRKIMKFNDLNRKLKNINI.

Positions 307-515 constitute a PCI domain; that stretch reads TFSDILLYIQ…IHIADTKVSH (209 aa).

The protein belongs to the eIF-3 subunit L family. Component of the eukaryotic translation initiation factor 3 (eIF-3) complex. The eIF-3 complex interacts with pix.

It localises to the cytoplasm. Its function is as follows. Component of the eukaryotic translation initiation factor 3 (eIF-3) complex, which is involved in protein synthesis of a specialized repertoire of mRNAs and, together with other initiation factors, stimulates binding of mRNA and methionyl-tRNAi to the 40S ribosome. The eIF-3 complex specifically targets and initiates translation of a subset of mRNAs involved in cell proliferation. The sequence is that of Eukaryotic translation initiation factor 3 subunit L from Drosophila grimshawi (Hawaiian fruit fly).